Here is a 425-residue protein sequence, read N- to C-terminus: Serine--tRNA ligase (425 aa).

L-serine is bound at residue 232-234; it reads TSE. ATP contacts are provided by residues 263–265 and Val-279; that span reads RRE. Residue Glu-286 coordinates L-serine. 350-353 serves as a coordination point for ATP; sequence EAVS. An L-serine-binding site is contributed by Thr-387.

This sequence belongs to the class-II aminoacyl-tRNA synthetase family. Type-1 seryl-tRNA synthetase subfamily. Homodimer. The tRNA molecule binds across the dimer.

It is found in the cytoplasm. The catalysed reaction is tRNA(Ser) + L-serine + ATP = L-seryl-tRNA(Ser) + AMP + diphosphate + H(+). It carries out the reaction tRNA(Sec) + L-serine + ATP = L-seryl-tRNA(Sec) + AMP + diphosphate + H(+). It functions in the pathway aminoacyl-tRNA biosynthesis; selenocysteinyl-tRNA(Sec) biosynthesis; L-seryl-tRNA(Sec) from L-serine and tRNA(Sec): step 1/1. In terms of biological role, catalyzes the attachment of serine to tRNA(Ser). Is also able to aminoacylate tRNA(Sec) with serine, to form the misacylated tRNA L-seryl-tRNA(Sec), which will be further converted into selenocysteinyl-tRNA(Sec). This is Serine--tRNA ligase from Methanoculleus marisnigri (strain ATCC 35101 / DSM 1498 / JR1).